We begin with the raw amino-acid sequence, 285 residues long: Shikimate dehydrogenase (NADP(+)) (285 aa).

Shikimate-binding positions include 20–22 (SIS) and serine 67. The active-site Proton acceptor is the lysine 71. Residues asparagine 92 and aspartate 107 each coordinate shikimate. NADP(+)-binding positions include 129–133 (GAGGA) and isoleucine 227. Tyrosine 229 contacts shikimate. NADP(+) is bound at residue glycine 250.

The protein belongs to the shikimate dehydrogenase family. As to quaternary structure, homodimer.

The catalysed reaction is shikimate + NADP(+) = 3-dehydroshikimate + NADPH + H(+). It functions in the pathway metabolic intermediate biosynthesis; chorismate biosynthesis; chorismate from D-erythrose 4-phosphate and phosphoenolpyruvate: step 4/7. Its function is as follows. Involved in the biosynthesis of the chorismate, which leads to the biosynthesis of aromatic amino acids. Catalyzes the reversible NADPH linked reduction of 3-dehydroshikimate (DHSA) to yield shikimate (SA). The polypeptide is Shikimate dehydrogenase (NADP(+)) (Streptococcus thermophilus (strain ATCC BAA-491 / LMD-9)).